The chain runs to 129 residues: NADPH-dependent 7-cyano-7-deazaguanine reductase (129 aa).

Cys34 serves as the catalytic Thioimide intermediate. Catalysis depends on Asp41, which acts as the Proton donor. Substrate is bound by residues Val56–Leu58 and His75–Glu76.

Belongs to the GTP cyclohydrolase I family. QueF type 1 subfamily.

The protein resides in the cytoplasm. It carries out the reaction 7-aminomethyl-7-carbaguanine + 2 NADP(+) = 7-cyano-7-deazaguanine + 2 NADPH + 3 H(+). The protein operates within tRNA modification; tRNA-queuosine biosynthesis. Functionally, catalyzes the NADPH-dependent reduction of 7-cyano-7-deazaguanine (preQ0) to 7-aminomethyl-7-deazaguanine (preQ1). This chain is NADPH-dependent 7-cyano-7-deazaguanine reductase, found in Alkalilimnicola ehrlichii (strain ATCC BAA-1101 / DSM 17681 / MLHE-1).